We begin with the raw amino-acid sequence, 453 residues long: uncharacterized protein (453 aa).

The TRAM domain maps to 5–63 (LLKKNQSIELTIEDLTHDGSGVGKIDGYPFFIPNTLPGEKVTAKIIKLNKNYGFARMEN). The [4Fe-4S] cluster site is built by C76, C82, C85, and C162. Residues Q285, Y314, E335, and D383 each contribute to the S-adenosyl-L-methionine site. Residue C410 is the Nucleophile of the active site.

Belongs to the class I-like SAM-binding methyltransferase superfamily. RNA M5U methyltransferase family.

This is an uncharacterized protein from Listeria monocytogenes serovar 1/2a (strain ATCC BAA-679 / EGD-e).